The chain runs to 87 residues: U3-theraphotoxin-Hhn1a 7 (87 aa).

The signal sequence occupies residues 1 to 24; the sequence is MVNMKASMFLTFAGLVLLFVVSYA. A propeptide spanning residues 25-52 is cleaved from the precursor; the sequence is SESEEKEFPKEMLSSIFAVDNDFKQEER. Intrachain disulfides connect Cys54–Cys67, Cys61–Cys72, and Cys66–Cys79.

The protein belongs to the neurotoxin 10 (Hwtx-1) family. 51 (Hntx-8) subfamily. Hntx-8 sub-subfamily. In terms of tissue distribution, expressed by the venom gland.

Its subcellular location is the secreted. Its function is as follows. Ion channel inhibitor. In Cyriopagopus hainanus (Chinese bird spider), this protein is U3-theraphotoxin-Hhn1a 7.